We begin with the raw amino-acid sequence, 5628 residues long: Polyketide synthase ThaG (5628 aa).

The Ketosynthase family 3 (KS3) 1 domain occupies 13-448 (HDDIAVIGIA…GTNAHVVLRE (436 aa)). Catalysis depends on for beta-ketoacyl synthase 1 activity residues Cys184, His319, and His361. Disordered stretches follow at residues 552–613 (GNLV…DGPT) and 1156–1183 (ASPGAASSGAAAPNAASDASRDTERAEA). A compositionally biased stretch (basic and acidic residues) spans 559 to 589 (GPHDEQADHDGSGEHGEHGERARAGADDLSR). Over residues 1156 to 1173 (ASPGAASSGAAAPNAASD) the composition is skewed to low complexity. The span at 1174 to 1183 (ASRDTERAEA) shows a compositional bias: basic and acidic residues. Residues 1209–1286 (AHGSARLPAL…RLAGHLATRL (78 aa)) enclose the Carrier 1 domain. Ser1246 bears the O-(pantetheine 4'-phosphoryl)serine mark. The Ketosynthase family 3 (KS3) 2 domain occupies 1373 to 1781 (YEPIAIVGMS…GTNAHVIVEA (409 aa)). Active-site for beta-ketoacyl synthase 2 activity residues include Cys1529, His1664, and His1704. The interval 1967-2099 (AREPGARERA…GVVDELNEPA (133 aa)) is N-terminal hotdog fold 1. Residues 1967 to 2261 (AREPGARERA…SARWRKLAGA (295 aa)) form the PKS/mFAS DH 1 domain. The active-site Proton acceptor; for dehydratase activity 1 is the His1999. The tract at residues 2113-2261 (AGERVDGAAL…SARWRKLAGA (149 aa)) is C-terminal hotdog fold 1. The active-site Proton donor; for dehydratase activity 1 is the Asp2175. Residues 2426-2446 (DADEDDRDGREPAGGPPLRDD) are disordered. The Carrier 2 domain maps to 2702–2780 (PAARVDLHAL…AIARALDASA (79 aa)). Residues 2817-2836 (TPPDAGAPQRGAHAAAAEGS) form a disordered region. Positions 2822-2835 (GAPQRGAHAAAAEG) are enriched in low complexity. Residues 2862-2935 (ARVGARLSAL…ELTDYFVRRH (74 aa)) form the Carrier 3 domain. The residue at position 2896 (Ser2896) is an O-(pantetheine 4'-phosphoryl)serine. In terms of domain architecture, Ketosynthase family 3 (KS3) 3 spans 3005-3430 (ADAIAVIGLA…GANAHVIVRE (426 aa)). Active-site for beta-ketoacyl synthase 3 activity residues include Cys3175, His3310, and His3351. Residues 3526-3546 (PGKKQLRGNGRARRGDAPPAG) form a disordered region. The interval 3621–3743 (HPMLDANRSE…GRSPSRAARG (123 aa)) is N-terminal hotdog fold 2. The region spanning 3621 to 3895 (HPMLDANRSE…SRAAASWRTA (275 aa)) is the PKS/mFAS DH 2 domain. The active-site Proton acceptor; for dehydratase activity 2 is the His3650. A C-terminal hotdog fold 2 region spans residues 3758–3895 (RAAPAFDADA…SRAAASWRTA (138 aa)). Asp3818 (proton donor; for dehydratase activity 2) is an active-site residue. A disordered region spans residues 3917–3942 (PAAESPSAATSTSAATSPAISTSAAT). In terms of domain architecture, Carrier 4 spans 4840–4914 (TRTAALLRSL…ALAAYVGSQL (75 aa)). At Ser4874 the chain carries O-(pantetheine 4'-phosphoryl)serine. The segment at 4960–4992 (APRARTGADAPDTSLASSASSISSARASSPASP) is disordered. Residues 4998–5424 (SFDVAIVGAS…GVNAHVVLEE (427 aa)) enclose the Ketosynthase family 3 (KS3) 4 domain. Catalysis depends on for beta-ketoacyl synthase 4 activity residues Cys5158, His5293, and His5339. Residues 5470-5544 (ARIEAVIRDA…ALRDHVAERI (75 aa)) form the Carrier 5 domain. At Ser5504 the chain carries O-(pantetheine 4'-phosphoryl)serine. The disordered stretch occupies residues 5573-5603 (VSEATEASDASEASDASEASEASEASEASKA).

Requires pantetheine 4'-phosphate as cofactor.

The protein resides in the cytoplasm. Its pathway is antibiotic biosynthesis. Involved in production of the polyketide antibiotic thailandamide. The polypeptide is Polyketide synthase ThaG (Burkholderia thailandensis (strain ATCC 700388 / DSM 13276 / CCUG 48851 / CIP 106301 / E264)).